The chain runs to 210 residues: MTNLNYQQTHFVMSAPDIRHLPSDTGIEVAFAGRSNAGKSSALNTLTNQKSLARTSKTPGRTQLINLFEVADGKRLVDLPGYGYAEVPEEMKRKWQRALGEYLEKRQSLQGLVVLMDIRHPLKDLDQQMIEWAVDSNIAVLVLLTKADKLASGARKAQLNMVREAVLAFNGDVQVETFSSLKKQGVDKLRQKLDTWFNEMQPVEETQDGE.

Residues 25–199 (TGIEVAFAGR…RQKLDTWFNE (175 aa)) enclose the EngB-type G domain. Residues 33-40 (GRSNAGKS), 60-64 (GRTQL), 78-81 (DLPG), 145-148 (TKAD), and 178-180 (FSS) contribute to the GTP site. Positions 40 and 62 each coordinate Mg(2+).

Belongs to the TRAFAC class TrmE-Era-EngA-EngB-Septin-like GTPase superfamily. EngB GTPase family. Mg(2+) serves as cofactor.

Functionally, necessary for normal cell division and for the maintenance of normal septation. This is Probable GTP-binding protein EngB from Escherichia coli O157:H7.